We begin with the raw amino-acid sequence, 467 residues long: Glutamyl-tRNA(Gln) amidotransferase subunit A (467 aa).

Active-site charge relay system residues include lysine 57 and serine 132. Serine 156 (acyl-ester intermediate) is an active-site residue.

This sequence belongs to the amidase family. GatA subfamily. Heterotrimer of A, B and C subunits.

The enzyme catalyses L-glutamyl-tRNA(Gln) + L-glutamine + ATP + H2O = L-glutaminyl-tRNA(Gln) + L-glutamate + ADP + phosphate + H(+). Allows the formation of correctly charged Gln-tRNA(Gln) through the transamidation of misacylated Glu-tRNA(Gln) in organisms which lack glutaminyl-tRNA synthetase. The reaction takes place in the presence of glutamine and ATP through an activated gamma-phospho-Glu-tRNA(Gln). The polypeptide is Glutamyl-tRNA(Gln) amidotransferase subunit A (Pseudothermotoga lettingae (strain ATCC BAA-301 / DSM 14385 / NBRC 107922 / TMO) (Thermotoga lettingae)).